We begin with the raw amino-acid sequence, 179 residues long: Large ribosomal subunit protein uL6 (179 aa).

This sequence belongs to the universal ribosomal protein uL6 family. As to quaternary structure, part of the 50S ribosomal subunit.

In terms of biological role, this protein binds to the 23S rRNA, and is important in its secondary structure. It is located near the subunit interface in the base of the L7/L12 stalk, and near the tRNA binding site of the peptidyltransferase center. This Desulfovibrio desulfuricans (strain ATCC 27774 / DSM 6949 / MB) protein is Large ribosomal subunit protein uL6.